We begin with the raw amino-acid sequence, 260 residues long: DNA repair protein RecO (260 aa).

Belongs to the RecO family.

Involved in DNA repair and RecF pathway recombination. The polypeptide is DNA repair protein RecO (Streptococcus suis (strain 98HAH33)).